A 474-amino-acid polypeptide reads, in one-letter code: Synaptotagmin-17 (474 aa).

A disordered region spans residues 60–117 (WLMASRSNDKDGDSVHTASDVPLTPRTNSPDGRRSSSDTSKSTYSLTRRISSLDSRRP). The span at 96–117 (SDTSKSTYSLTRRISSLDSRRP) shows a compositional bias: low complexity. 2 positions are modified to phosphoserine: S118 and S119. C2 domains are found at residues 184–310 (QLGM…HWWK) and 321–455 (ELGE…EQWH).

It belongs to the synaptotagmin family. As to expression, expressed in brain and kidney.

Its subcellular location is the membrane. In terms of biological role, plays a role in dendrite formation by melanocytes. This is Synaptotagmin-17 (Syt17) from Rattus norvegicus (Rat).